The chain runs to 1132 residues: Serine/threonine-protein kinase spk-1 (1132 aa).

Residues 75-95 form a helical membrane-spanning segment; sequence GGSLILTDIFPTVLFMFVVLF. Disordered regions lie at residues 240–388 and 419–481; these read NEDQ…DSDD and NKKA…KRGG. Composition is skewed to acidic residues over residues 281–290 and 311–336; these read SEDEDVESQE and DEPIEEELASCHSDEDDHQNEVLGDE. Over residues 362–372 the composition is skewed to low complexity; the sequence is DSSVSSSTSST. Over residues 373-388 the composition is skewed to acidic residues; it reads PDDDEDDSATSYDSDD. Over residues 421–433 the composition is skewed to basic and acidic residues; it reads KAEVNANEERMDD. The span at 434–443 shows a compositional bias: low complexity; it reads VSVSPGRSDS. Residues 495 to 1044 form the Protein kinase domain; sequence YHVIRKLGWG…ANDALKHPFL (550 aa). Residues 501–509 and Lys-524 each bind ATP; that span reads LGWGHFSTV. The active-site Proton acceptor is the Asp-628. The disordered stretch occupies residues 1066–1121; that stretch reads QVPEALDGNQEVYRDENDSNSASERSANRSAGSDDEEEFHMDRPGPSGVINEPADV. Residues 1084 to 1096 show a composition bias toward low complexity; that stretch reads SNSASERSANRSA.

The protein belongs to the protein kinase superfamily. Ser/Thr protein kinase family.

Its subcellular location is the membrane. The catalysed reaction is L-seryl-[protein] + ATP = O-phospho-L-seryl-[protein] + ADP + H(+). It carries out the reaction L-threonyl-[protein] + ATP = O-phospho-L-threonyl-[protein] + ADP + H(+). Functionally, required for embryogenesis and germline development in both adult hermaphrodites and males. SR-protein kinase (SRPK) that binds directly to and phosphorylates RS domains. In Caenorhabditis briggsae, this protein is Serine/threonine-protein kinase spk-1 (spk-1).